We begin with the raw amino-acid sequence, 141 residues long: ATP synthase epsilon chain (141 aa).

The protein belongs to the ATPase epsilon chain family. F-type ATPases have 2 components, CF(1) - the catalytic core - and CF(0) - the membrane proton channel. CF(1) has five subunits: alpha(3), beta(3), gamma(1), delta(1), epsilon(1). CF(0) has three main subunits: a, b and c.

It is found in the cell inner membrane. Functionally, produces ATP from ADP in the presence of a proton gradient across the membrane. This is ATP synthase epsilon chain from Chromohalobacter salexigens (strain ATCC BAA-138 / DSM 3043 / CIP 106854 / NCIMB 13768 / 1H11).